Here is a 265-residue protein sequence, read N- to C-terminus: Putative hydro-lyase Teth514_1597 (265 aa).

This sequence belongs to the D-glutamate cyclase family.

The protein is Putative hydro-lyase Teth514_1597 of Thermoanaerobacter sp. (strain X514).